We begin with the raw amino-acid sequence, 231 residues long: tRNA (guanine-N(1)-)-methyltransferase (231 aa).

Residues Gly-111 and 131–136 (LGNYVL) each bind S-adenosyl-L-methionine.

Belongs to the RNA methyltransferase TrmD family. In terms of assembly, homodimer.

The protein resides in the cytoplasm. It carries out the reaction guanosine(37) in tRNA + S-adenosyl-L-methionine = N(1)-methylguanosine(37) in tRNA + S-adenosyl-L-homocysteine + H(+). Its function is as follows. Specifically methylates guanosine-37 in various tRNAs. This is tRNA (guanine-N(1)-)-methyltransferase from Leptospira interrogans serogroup Icterohaemorrhagiae serovar copenhageni (strain Fiocruz L1-130).